The following is a 219-amino-acid chain: Urease subunit gamma/beta (219 aa).

Residues 1-101 are urease gamma; sequence MFLTPREQEK…LVTVRNPIKS (101 aa). A urease beta region spans residues 102–219; that stretch reads SKKTLNTYII…IKRAKERGFA (118 aa).

It in the N-terminal section; belongs to the urease gamma subunit family. The protein in the C-terminal section; belongs to the urease beta subunit family. In terms of assembly, heterohexamer of 3 UreC (alpha) and 3 UreAB (gamma/beta) subunits.

It localises to the cytoplasm. It carries out the reaction urea + 2 H2O + H(+) = hydrogencarbonate + 2 NH4(+). It participates in nitrogen metabolism; urea degradation; CO(2) and NH(3) from urea (urease route): step 1/1. This Sulfurisphaera tokodaii (strain DSM 16993 / JCM 10545 / NBRC 100140 / 7) (Sulfolobus tokodaii) protein is Urease subunit gamma/beta.